The primary structure comprises 259 residues: 14-3-3-like protein GF14 omega (259 aa).

Residues serine 67, serine 109, and serine 190 each carry the phosphoserine modification. The residue at position 211 (threonine 211) is a Phosphothreonine.

It belongs to the 14-3-3 family. As to quaternary structure, interacts with CINV1.

The protein resides in the nucleus. Its subcellular location is the cytoplasm. Is associated with a DNA binding complex that binds to the G box, a well-characterized cis-acting DNA regulatory element found in plant genes. The sequence is that of 14-3-3-like protein GF14 omega (GRF2) from Arabidopsis thaliana (Mouse-ear cress).